The following is a 286-amino-acid chain: Probable syntaxin-7B (286 aa).

Residues 1–257 are Cytoplasmic-facing; sequence MTDRQPLISK…YVYKSSYRKK (257 aa). The segment covering 97 to 107 has biased composition (basic and acidic residues); that stretch reads LSTSNKKESSH. Residues 97–160 form a disordered region; sequence LSTSNKKESS…TNNNNNNNNN (64 aa). Residues 114-160 are compositionally biased toward low complexity; that stretch reads QQQQQQQNNGNSNNNGYNTRGGYNQQQQQQQQQYNDYTNNNNNNNNN. The t-SNARE coiled-coil homology domain maps to 185-247; sequence NRILDERNAN…EDAVVELEKA (63 aa). The chain crosses the membrane as a helical; Anchor for type IV membrane protein span at residues 258–278; it reads MIIFVICLLVTLVAVGIFLAI. Over 279 to 286 the chain is Vesicular; it reads YYGVIKKK.

This sequence belongs to the syntaxin family.

Its subcellular location is the membrane. The sequence is that of Probable syntaxin-7B (syn7B) from Dictyostelium discoideum (Social amoeba).